We begin with the raw amino-acid sequence, 171 residues long: MATATNGNASAAAAAADSAVQEPPHKIAKVAPLLKVKKLSENAVLPSRGSALAAGYDLSSAAEVVVPARGKAMVPTDLSIAIPEGTYARVAPRSGLALKHSIDVGAGVIDADYRGPVGVILFNHSDTDFAVKPGDRIAQMIIEVIVTPEVAEVEDLDATVRGEGGFGSTGV.

A Mg(2+)-binding site is contributed by Glu143.

It belongs to the dUTPase family. Homotrimer. The cofactor is Mg(2+).

It carries out the reaction dUTP + H2O = dUMP + diphosphate + H(+). It functions in the pathway pyrimidine metabolism; dUMP biosynthesis; dUMP from dCTP (dUTP route): step 2/2. Functionally, this enzyme is involved in nucleotide metabolism: it produces dUMP, the immediate precursor of thymidine nucleotides and it decreases the intracellular concentration of dUTP, preventing uracil incorporation into DNA. The protein is Deoxyuridine 5'-triphosphate nucleotidohydrolase (DUT) of Oryza sativa subsp. japonica (Rice).